The primary structure comprises 553 residues: Arginine--tRNA ligase (553 aa).

The 'HIGH' region signature appears at 130 to 140; the sequence is ANPTGPVHLGG.

This sequence belongs to the class-I aminoacyl-tRNA synthetase family. As to quaternary structure, monomer.

The protein localises to the cytoplasm. It carries out the reaction tRNA(Arg) + L-arginine + ATP = L-arginyl-tRNA(Arg) + AMP + diphosphate. This Saccharopolyspora erythraea (strain ATCC 11635 / DSM 40517 / JCM 4748 / NBRC 13426 / NCIMB 8594 / NRRL 2338) protein is Arginine--tRNA ligase.